Here is a 118-residue protein sequence, read N- to C-terminus: Aspartate 1-decarboxylase (118 aa).

Ser-25 (schiff-base intermediate with substrate; via pyruvic acid) is an active-site residue. At Ser-25 the chain carries Pyruvic acid (Ser). Position 57 (Thr-57) interacts with substrate. Tyr-58 functions as the Proton donor in the catalytic mechanism. 73–75 (GAA) is a binding site for substrate.

The protein belongs to the PanD family. Heterooctamer of four alpha and four beta subunits. Pyruvate is required as a cofactor. Is synthesized initially as an inactive proenzyme, which is activated by self-cleavage at a specific serine bond to produce a beta-subunit with a hydroxyl group at its C-terminus and an alpha-subunit with a pyruvoyl group at its N-terminus.

Its subcellular location is the cytoplasm. The enzyme catalyses L-aspartate + H(+) = beta-alanine + CO2. The protein operates within cofactor biosynthesis; (R)-pantothenate biosynthesis; beta-alanine from L-aspartate: step 1/1. Its function is as follows. Catalyzes the pyruvoyl-dependent decarboxylation of aspartate to produce beta-alanine. The sequence is that of Aspartate 1-decarboxylase from Syntrophomonas wolfei subsp. wolfei (strain DSM 2245B / Goettingen).